We begin with the raw amino-acid sequence, 376 residues long: DNA polymerase IV (376 aa).

The 182-residue stretch at 6-187 folds into the UmuC domain; that stretch reads IIHIDMDAFF…LSIGKFYGVG (182 aa). Residues D10 and D105 each coordinate Mg(2+). Residue E106 is part of the active site.

This sequence belongs to the DNA polymerase type-Y family. As to quaternary structure, monomer. The cofactor is Mg(2+).

It is found in the cytoplasm. The enzyme catalyses DNA(n) + a 2'-deoxyribonucleoside 5'-triphosphate = DNA(n+1) + diphosphate. Poorly processive, error-prone DNA polymerase involved in untargeted mutagenesis. Copies undamaged DNA at stalled replication forks, which arise in vivo from mismatched or misaligned primer ends. These misaligned primers can be extended by PolIV. Exhibits no 3'-5' exonuclease (proofreading) activity. May be involved in translesional synthesis, in conjunction with the beta clamp from PolIII. The sequence is that of DNA polymerase IV from Desulfotalea psychrophila (strain LSv54 / DSM 12343).